A 208-amino-acid polypeptide reads, in one-letter code: Probable very-long-chain (3R)-3-hydroxyacyl-CoA dehydratase (208 aa).

At 1 to 11 the chain is on the cytoplasmic side; that stretch reads MSKILKIQYLK. A helical transmembrane segment spans residues 12–35; that stretch reads LYNVISCFLWMSVLLRTGLIWGIT. At 36–46 the chain is on the lumenal side; it reads KDTAVVFHETN. A helical transmembrane segment spans residues 47–67; the sequence is TLVRWVQTLAIAEVFHSIFGL. At 68–78 the chain is on the cytoplasmic side; sequence VSSSPLTTIIQ. The helical transmembrane segment at 79-97 threads the bilayer; the sequence is VASRLYLVWGVCYPFSYVI. Residues 98–102 are Lumenal-facing; the sequence is EGSPI. The helical transmembrane segment at 103 to 123 threads the bilayer; sequence YLSMIIAWSITEIIRYAFYAF. Over 124 to 134 the chain is Cytoplasmic; that stretch reads NLNGDIPAFLT. The chain crosses the membrane as a helical span at residues 135 to 157; sequence WLRYNTFLILYPIGAGSEFLLVL. Catalysis depends on residues Y145 and E152. The Lumenal segment spans residues 158-171; the sequence is KSRIAAQYVWSLNK. The chain crosses the membrane as a helical span at residues 172 to 192; the sequence is LLWPILMSIYPPGLYIMYTHM. The Cytoplasmic segment spans residues 193-208; that stretch reads LAQRRKISKRAAARRT.

The protein belongs to the very long-chain fatty acids dehydratase HACD family.

Its subcellular location is the endoplasmic reticulum membrane. It carries out the reaction a very-long-chain (3R)-3-hydroxyacyl-CoA = a very-long-chain (2E)-enoyl-CoA + H2O. It functions in the pathway lipid metabolism; fatty acid biosynthesis. Its function is as follows. Catalyzes the third of the four reactions of the long-chain fatty acids elongation cycle. This endoplasmic reticulum-bound enzymatic process, allows the addition of two carbons to the chain of long- and very long-chain fatty acids/VLCFAs per cycle. This enzyme catalyzes the dehydration of the 3-hydroxyacyl-CoA intermediate into trans-2,3-enoyl-CoA, within each cycle of fatty acid elongation. Thereby, it participates in the production of VLCFAs of different chain lengths that are involved in multiple biological processes as precursors of membrane lipids and lipid mediators. The protein is Probable very-long-chain (3R)-3-hydroxyacyl-CoA dehydratase of Schizosaccharomyces pombe (strain 972 / ATCC 24843) (Fission yeast).